A 183-amino-acid chain; its full sequence is Crossover junction endodeoxyribonuclease RuvC (183 aa).

Residues Asp-7, Glu-66, and Asp-138 contribute to the active site. Asp-7, Glu-66, and Asp-138 together coordinate Mg(2+).

Belongs to the RuvC family. Homodimer which binds Holliday junction (HJ) DNA. The HJ becomes 2-fold symmetrical on binding to RuvC with unstacked arms; it has a different conformation from HJ DNA in complex with RuvA. In the full resolvosome a probable DNA-RuvA(4)-RuvB(12)-RuvC(2) complex forms which resolves the HJ. The cofactor is Mg(2+).

Its subcellular location is the cytoplasm. The catalysed reaction is Endonucleolytic cleavage at a junction such as a reciprocal single-stranded crossover between two homologous DNA duplexes (Holliday junction).. Functionally, the RuvA-RuvB-RuvC complex processes Holliday junction (HJ) DNA during genetic recombination and DNA repair. Endonuclease that resolves HJ intermediates. Cleaves cruciform DNA by making single-stranded nicks across the HJ at symmetrical positions within the homologous arms, yielding a 5'-phosphate and a 3'-hydroxyl group; requires a central core of homology in the junction. The consensus cleavage sequence is 5'-(A/T)TT(C/G)-3'. Cleavage occurs on the 3'-side of the TT dinucleotide at the point of strand exchange. HJ branch migration catalyzed by RuvA-RuvB allows RuvC to scan DNA until it finds its consensus sequence, where it cleaves and resolves the cruciform DNA. This is Crossover junction endodeoxyribonuclease RuvC from Burkholderia ambifaria (strain ATCC BAA-244 / DSM 16087 / CCUG 44356 / LMG 19182 / AMMD) (Burkholderia cepacia (strain AMMD)).